Reading from the N-terminus, the 377-residue chain is Cytochrome b (377 aa).

4 helical membrane passes run 34–54, 78–100, 113–133, and 179–199; these read FGFL…FLSM, WLLR…IHIA, TWMT…LGYV, and FFTL…IHLL. H84 and H98 together coordinate heme b. Residues H183 and H197 each coordinate heme b. H202 provides a ligand contact to a ubiquinone. The next 4 membrane-spanning stretches (helical) occupy residues 225-245, 288-308, 323-343, and 352-372; these read FTIK…ILVL, KLGG…LPLY, MLFW…AQAI, and QILT…SVLW.

The protein belongs to the cytochrome b family. As to quaternary structure, the main subunits of complex b-c1 are: cytochrome b, cytochrome c1 and the Rieske protein. Heme b serves as cofactor.

The protein localises to the mitochondrion inner membrane. Its function is as follows. Component of the ubiquinol-cytochrome c reductase complex (complex III or cytochrome b-c1 complex) that is part of the mitochondrial respiratory chain. The b-c1 complex mediates electron transfer from ubiquinol to cytochrome c. Contributes to the generation of a proton gradient across the mitochondrial membrane that is then used for ATP synthesis. This chain is Cytochrome b (mt:Cyt-b), found in Priapulus caudatus (Priapulid worm).